The primary structure comprises 623 residues: Laccase-1 (623 aa).

An N-terminal signal peptide occupies residues 1-22 (MKTFTSALALVVGMLAPGAVVA). The propeptide occupies 23-50 (APPSTPAQRDLVELREARQEGGKDLRPR). Cys-54 and Cys-62 are disulfide-bonded. Asn-89 and Asn-138 each carry an N-linked (GlcNAc...) asparagine glycan. 4 residues coordinate Cu cation: His-143, His-145, His-188, and His-190. Intrachain disulfides connect Cys-164–Cys-590 and Cys-348–Cys-382. Asn-251, Asn-266, Asn-294, and Asn-339 each carry an N-linked (GlcNAc...) asparagine glycan. N-linked (GlcNAc...) asparagine glycosylation is found at Asn-426 and Asn-446. His-481, His-484, His-486, His-552, Cys-553, His-554, and His-558 together coordinate Cu cation. Residues 610–623 (KRRRWVEESEWLVR) constitute a propeptide that is removed on maturation.

The protein belongs to the multicopper oxidase family. As to quaternary structure, monomer. The cofactor is Cu cation. As to expression, secreted protein; extracellular space.

It carries out the reaction 4 hydroquinone + O2 = 4 benzosemiquinone + 2 H2O. In terms of biological role, lignin degradation and detoxification of lignin-derived products. The chain is Laccase-1 (LAC1) from Melanocarpus albomyces.